A 79-amino-acid chain; its full sequence is Conotoxin Cl9.4 (79 aa).

An N-terminal signal peptide occupies residues 1 to 23 (MNCYLILTVALLLTSAMTGTTTA). Residues 24-37 (GQLNKKGVTLREDD) constitute a propeptide that is removed on maturation. 3 disulfide bridges follow: Cys-41/Cys-58, Cys-46/Cys-68, and Cys-48/Cys-73.

In terms of tissue distribution, expressed by the venom duct.

It localises to the secreted. In Californiconus californicus (California cone), this protein is Conotoxin Cl9.4.